The sequence spans 145 residues: Probable low molecular weight protein-tyrosine-phosphatase EpsP (145 aa).

Residue cysteine 9 is the Nucleophile of the active site. Arginine 15 is an active-site residue. Residue aspartate 114 is the Proton donor of the active site.

This sequence belongs to the low molecular weight phosphotyrosine protein phosphatase family.

The enzyme catalyses O-phospho-L-tyrosyl-[protein] + H2O = L-tyrosyl-[protein] + phosphate. It participates in glycan metabolism; exopolysaccharide biosynthesis. Functionally, may be involved in assembly or function of the EPS I polymerization/export complex and/or the EpsB ATPase. Alternatively it may function in the removal of the terminal phosphate from C55-isoprenyl pyrophosphate in order to recycle the C55-isoprenyl phosphate lipid carrier used in the synthesis of polysaccharide repeat units. This Ralstonia nicotianae (strain ATCC BAA-1114 / GMI1000) (Ralstonia solanacearum) protein is Probable low molecular weight protein-tyrosine-phosphatase EpsP (epsP).